Consider the following 398-residue polypeptide: Thyrotropin-releasing hormone receptor (398 aa).

Topologically, residues 1 to 28 (MENETVSELNQTQLQPRAVVALEYQVVT) are extracellular. Residues Asn-3 and Asn-10 are each glycosylated (N-linked (GlcNAc...) asparagine). The chain crosses the membrane as a helical span at residues 29-51 (ILLVLIICGLGIVGNIMVVLVVM). Residues 52–61 (RTKHMRTPTN) lie on the Cytoplasmic side of the membrane. A helical membrane pass occupies residues 62–83 (CYLVSLAVADLMVLVAAGLPNI). Topologically, residues 84 to 99 (TDSIYGSWVYGYVGCL) are extracellular. A disulfide bond links Cys-98 and Cys-179. Residues 100–121 (CITYLQYLGINASSCSITAFTI) traverse the membrane as a helical segment. Residues 122 to 144 (ERYIAICHPIKAQFLCTFSRAKK) lie on the Cytoplasmic side of the membrane. Residues 145–168 (IIIFVWAFTSLYCMLWFFLLDLNI) traverse the membrane as a helical segment. The Extracellular portion of the chain corresponds to 169-193 (STYKDAIVISCGYKISRNYYSPIYL). The helical transmembrane segment at 194-215 (MDFGVFYVVPMILATVLYGFIA) threads the bilayer. Residues 216-266 (RILFLNPIPSDPKENSKTWKNDSTHQNTNLNVNTSNRCFNSTVSSRKQVTK) lie on the Cytoplasmic side of the membrane. The chain crosses the membrane as a helical span at residues 267 to 288 (MLAVVVILFALLWMPYRTLVVV). The Extracellular segment spans residues 289–296 (NSFLSSPF). A helical transmembrane segment spans residues 297 to 319 (QENWFLLFCRICIYLNSAINPVI). Topologically, residues 320-398 (YNLMSQKFRA…LASEVSFSQS (79 aa)) are cytoplasmic.

The protein belongs to the G-protein coupled receptor 1 family.

It localises to the cell membrane. Receptor for thyrotropin-releasing hormone (TRH). Upon ligand binding, this G-protein-coupled receptor triggers activation of the phosphatidylinositol (IP3)-calcium-protein kinase C (PKC) pathway. This Homo sapiens (Human) protein is Thyrotropin-releasing hormone receptor (TRHR).